The following is a 376-amino-acid chain: NIF3-like protein 1 (376 aa).

The residue at position 108 (K108) is an N6-acetyllysine. The tract at residues 243-376 is mediates interaction with COPS2; the sequence is LLLHTGMGRL…ETDRDPLRVV (134 aa). A Phosphothreonine modification is found at T254. S258 carries the post-translational modification Phosphoserine.

Belongs to the GTP cyclohydrolase I type 2/NIF3 family. Homodimer. Interacts with COPS2. Interacts with THOC7.

It localises to the cytoplasm. The protein resides in the nucleus. Functionally, may function as a transcriptional corepressor through its interaction with COPS2, negatively regulating the expression of genes involved in neuronal differentiation. The polypeptide is NIF3-like protein 1 (Rattus norvegicus (Rat)).